A 41-amino-acid chain; its full sequence is Large ribosomal subunit protein bL36 (41 aa).

It belongs to the bacterial ribosomal protein bL36 family.

This Xanthobacter autotrophicus (strain ATCC BAA-1158 / Py2) protein is Large ribosomal subunit protein bL36.